Reading from the N-terminus, the 162-residue chain is Protein NrdI (162 aa).

It belongs to the NrdI family.

Functionally, probably involved in ribonucleotide reductase function. The chain is Protein NrdI from Streptococcus pyogenes serotype M2 (strain MGAS10270).